Consider the following 454-residue polypeptide: Bifunctional protein GlmU (454 aa).

The pyrophosphorylase stretch occupies residues 1 to 232; that stretch reads MTDRTCLSIV…VDNVIGINNR (232 aa). UDP-N-acetyl-alpha-D-glucosamine is bound by residues 11-14, Lys-25, Gln-78, and 83-84; these read LAAG and GT. Asp-108 is a Mg(2+) binding site. Residues Gly-144, Glu-158, Asn-173, and Asn-230 each contribute to the UDP-N-acetyl-alpha-D-glucosamine site. Asn-230 contributes to the Mg(2+) binding site. The segment at 233–253 is linker; the sequence is AELAEAETIWQNRKRRELMLS. The N-acetyltransferase stretch occupies residues 254–454; it reads GVTLIAPETV…AIKAAKSVSK (201 aa). UDP-N-acetyl-alpha-D-glucosamine-binding residues include Arg-319 and Lys-337. Catalysis depends on His-349, which acts as the Proton acceptor. Positions 352 and 363 each coordinate UDP-N-acetyl-alpha-D-glucosamine. Acetyl-CoA is bound by residues Ala-366, 372–373, Ser-391, Ser-409, and Arg-426; that span reads NY.

It in the N-terminal section; belongs to the N-acetylglucosamine-1-phosphate uridyltransferase family. In the C-terminal section; belongs to the transferase hexapeptide repeat family. In terms of assembly, homotrimer. It depends on Mg(2+) as a cofactor.

It is found in the cytoplasm. It carries out the reaction alpha-D-glucosamine 1-phosphate + acetyl-CoA = N-acetyl-alpha-D-glucosamine 1-phosphate + CoA + H(+). The enzyme catalyses N-acetyl-alpha-D-glucosamine 1-phosphate + UTP + H(+) = UDP-N-acetyl-alpha-D-glucosamine + diphosphate. Its pathway is nucleotide-sugar biosynthesis; UDP-N-acetyl-alpha-D-glucosamine biosynthesis; N-acetyl-alpha-D-glucosamine 1-phosphate from alpha-D-glucosamine 6-phosphate (route II): step 2/2. It functions in the pathway nucleotide-sugar biosynthesis; UDP-N-acetyl-alpha-D-glucosamine biosynthesis; UDP-N-acetyl-alpha-D-glucosamine from N-acetyl-alpha-D-glucosamine 1-phosphate: step 1/1. The protein operates within bacterial outer membrane biogenesis; LPS lipid A biosynthesis. Its function is as follows. Catalyzes the last two sequential reactions in the de novo biosynthetic pathway for UDP-N-acetylglucosamine (UDP-GlcNAc). The C-terminal domain catalyzes the transfer of acetyl group from acetyl coenzyme A to glucosamine-1-phosphate (GlcN-1-P) to produce N-acetylglucosamine-1-phosphate (GlcNAc-1-P), which is converted into UDP-GlcNAc by the transfer of uridine 5-monophosphate (from uridine 5-triphosphate), a reaction catalyzed by the N-terminal domain. The polypeptide is Bifunctional protein GlmU (Brucella abortus (strain S19)).